We begin with the raw amino-acid sequence, 447 residues long: Argininosuccinate synthase (447 aa).

Residues 17-25 (AFSGGLDTS) and alanine 43 each bind ATP. Position 99 (tyrosine 99) interacts with L-citrulline. Residues glycine 129 and threonine 131 each coordinate ATP. 3 residues coordinate L-aspartate: threonine 131, asparagine 135, and aspartate 136. Asparagine 135 contributes to the L-citrulline binding site. Aspartate 136 lines the ATP pocket. Positions 139 and 192 each coordinate L-citrulline. Residue aspartate 194 participates in ATP binding. Residues threonine 201, glutamate 203, and glutamate 280 each contribute to the L-citrulline site.

The protein belongs to the argininosuccinate synthase family. Type 2 subfamily. In terms of assembly, homotetramer.

The protein localises to the cytoplasm. It carries out the reaction L-citrulline + L-aspartate + ATP = 2-(N(omega)-L-arginino)succinate + AMP + diphosphate + H(+). Its pathway is amino-acid biosynthesis; L-arginine biosynthesis; L-arginine from L-ornithine and carbamoyl phosphate: step 2/3. The protein is Argininosuccinate synthase of Klebsiella pneumoniae (strain 342).